The chain runs to 864 residues: Leucine--tRNA ligase (864 aa).

The short motif at 42–52 (PYPSGKLHMGH) is the 'HIGH' region element. Residues 622–626 (KMSKS) carry the 'KMSKS' region motif. An ATP-binding site is contributed by Lys-625.

This sequence belongs to the class-I aminoacyl-tRNA synthetase family.

It is found in the cytoplasm. It carries out the reaction tRNA(Leu) + L-leucine + ATP = L-leucyl-tRNA(Leu) + AMP + diphosphate. The chain is Leucine--tRNA ligase from Cellvibrio japonicus (strain Ueda107) (Pseudomonas fluorescens subsp. cellulosa).